Here is a 463-residue protein sequence, read N- to C-terminus: tRNA-2-methylthio-N(6)-dimethylallyladenosine synthase (463 aa).

Residues 19–135 enclose the MTTase N-terminal domain; the sequence is RSYWITTFGC…LENLLGKVDL (117 aa). [4Fe-4S] cluster contacts are provided by Cys28, Cys64, Cys98, Cys170, Cys174, and Cys177. The Radical SAM core domain maps to 156-393; the sequence is RESSICGWVN…NALVEKTARN (238 aa). Residues 396–463 enclose the TRAM domain; it reads QRYINNIESV…RPFSLTGELC (68 aa).

Belongs to the methylthiotransferase family. MiaB subfamily. Monomer. [4Fe-4S] cluster serves as cofactor.

The protein localises to the cytoplasm. The catalysed reaction is N(6)-dimethylallyladenosine(37) in tRNA + (sulfur carrier)-SH + AH2 + 2 S-adenosyl-L-methionine = 2-methylsulfanyl-N(6)-dimethylallyladenosine(37) in tRNA + (sulfur carrier)-H + 5'-deoxyadenosine + L-methionine + A + S-adenosyl-L-homocysteine + 2 H(+). Functionally, catalyzes the methylthiolation of N6-(dimethylallyl)adenosine (i(6)A), leading to the formation of 2-methylthio-N6-(dimethylallyl)adenosine (ms(2)i(6)A) at position 37 in tRNAs that read codons beginning with uridine. This Prochlorococcus marinus (strain MIT 9312) protein is tRNA-2-methylthio-N(6)-dimethylallyladenosine synthase.